The following is a 178-amino-acid chain: CDP-archaeol synthase (178 aa).

The next 4 membrane-spanning stretches (helical) occupy residues 3–23 (LLLL…ANAV), 56–76 (FFGI…VILY), 91–111 (IILS…GSFI), and 136–156 (LLFA…LLVI).

The protein belongs to the CDP-archaeol synthase family. Requires Mg(2+) as cofactor.

It is found in the cell membrane. The enzyme catalyses 2,3-bis-O-(geranylgeranyl)-sn-glycerol 1-phosphate + CTP + H(+) = CDP-2,3-bis-O-(geranylgeranyl)-sn-glycerol + diphosphate. It functions in the pathway membrane lipid metabolism; glycerophospholipid metabolism. Functionally, catalyzes the formation of CDP-2,3-bis-(O-geranylgeranyl)-sn-glycerol (CDP-archaeol) from 2,3-bis-(O-geranylgeranyl)-sn-glycerol 1-phosphate (DGGGP) and CTP. This reaction is the third ether-bond-formation step in the biosynthesis of archaeal membrane lipids. This Methanococcus maripaludis (strain C5 / ATCC BAA-1333) protein is CDP-archaeol synthase.